Consider the following 985-residue polypeptide: Lateral signaling target protein 2 homolog (985 aa).

Disordered regions lie at residues 310–453 (PLGS…ETDE), 498–520 (EYGAGEQQRQRHRDGQEDEPSTS), 533–640 (LRLP…SSLS), and 747–892 (DNVF…TTTA). Low complexity-rich tracts occupy residues 327 to 348 (HPTTSSNNNNNNGDTTGTTNTH), 384 to 393 (SLSPNSTPTA), and 401 to 422 (PSHSIASTSSSATGSTHPPADW). The segment covering 423-453 (SDGDDEDEEDDDDDIEVEEEELDSTDDETDE) has biased composition (acidic residues). Phosphoserine is present on residues Ser-537 and Ser-538. 2 stretches are compositionally biased toward basic residues: residues 563–589 (VYRHRHSHRHHHRHHHHHHQRHHHHQH) and 596–607 (HPHRTTRSGRKR). Composition is skewed to low complexity over residues 629–640 (ASGDTSAASSLS) and 761–770 (NGNQANASAQ). Polar residues predominate over residues 776 to 785 (GSIQRNNTVD). At Ser-808 the chain carries Phosphoserine. The segment covering 812-866 (QESASTSTSSSQLHQEQQQLQIQVQRQRNNSVGSNTPSSASSTSSSSEQNSPVSA) has biased composition (low complexity). A compositionally biased stretch (polar residues) spans 875–885 (QSNNETQMPSS). The FYVE-type zinc-finger motif lies at 904–964 (DGKAPRCMSC…VCRECYVREV (61 aa)). Zn(2+) contacts are provided by Cys-910, Cys-913, Cys-926, Cys-929, Cys-934, Cys-937, Cys-956, and Cys-959.

It belongs to the lst-2 family.

In terms of biological role, negative regulator of epidermal growth factor receptor (EGFR) signaling. The polypeptide is Lateral signaling target protein 2 homolog (Drosophila ananassae (Fruit fly)).